The primary structure comprises 61 residues: Putative defensin-like protein 72 (61 aa).

Cystine bridges form between C21–C59, C25–C48, C34–C57, and C38–C58.

This sequence belongs to the DEFL family.

The polypeptide is Putative defensin-like protein 72 (Arabidopsis thaliana (Mouse-ear cress)).